The primary structure comprises 141 residues: Large-conductance mechanosensitive channel (141 aa).

Helical transmembrane passes span phenylalanine 8 to glycine 28, isoleucine 38 to leucine 58, and glycine 80 to valine 100.

Belongs to the MscL family. As to quaternary structure, homopentamer.

It localises to the cell inner membrane. Channel that opens in response to stretch forces in the membrane lipid bilayer. May participate in the regulation of osmotic pressure changes within the cell. This chain is Large-conductance mechanosensitive channel, found in Beijerinckia indica subsp. indica (strain ATCC 9039 / DSM 1715 / NCIMB 8712).